The sequence spans 371 residues: Jasmonate-induced oxygenase 2 (371 aa).

In terms of domain architecture, Fe2OG dioxygenase spans 219 to 320; sequence NIGACLRVNY…RVSLAFFYNP (102 aa). Jasmonate is bound at residue R225. The 2-oxoglutarate site is built by N227 and Y229. 3 residues coordinate Fe cation: H244, D246, and H301. Residues R311 and S313 each coordinate 2-oxoglutarate. R350 and R354 together coordinate jasmonate.

Belongs to the iron/ascorbate-dependent oxidoreductase family. Requires L-ascorbate as cofactor. Fe(2+) is required as a cofactor.

It carries out the reaction jasmonate + 2-oxoglutarate + O2 = (1R,2R)-12-hydroxyjasmonate + succinate + CO2. Functionally, 2-oxoglutarate-dependent dioxygenase involved in the oxidation of jasmonate (JA), a stress-induced phytohormone synthesized in response to attack by pathogens and herbivores, which triggers the activation of defense responses via the JA-mediated signaling pathway. Converts JA to 12-hydroxyjasmonate (12OH-JA), an inactive form of JA. Is specific to free JA, and cannot oxidize the bioactive form jasmonoyl-L-isoleucine (JA-Ile) or other JA-amino acid conjugates. Prevents over-accumulation of JA and indirectly its bioactive form JA-Ile under stress response. Acts as a negative regulator of JA-mediated defense signaling, by contributing to 12OH-JA accumulation, which represses JA defense responses upon infection by the fungal pathogen Botrytis cinerea. Acts as a negative regulator of JA-mediated defense responses upon infestation by the herbivorous caterpillar Mamestra brassicae. May be involved in the catabolism of cytotoxic polycyclic aromatic hydrocarbons (PAHs). The sequence is that of Jasmonate-induced oxygenase 2 from Arabidopsis thaliana (Mouse-ear cress).